The following is a 359-amino-acid chain: sn-1 acyl-lipid omega-3 desaturase (ferredoxin) (359 aa).

Positions 1 to 15 are enriched in polar residues; the sequence is MQLDTISFNNPLNSE. Positions 1–20 are disordered; that stretch reads MQLDTISFNNPLNSETSEDT. A run of 2 helical transmembrane segments spans residues 47–67 and 70–90; these read LFYFFRDILIIGLLYAVASYL and WLFFPIFWLMQGTMFWALFVV. The short motif at 92-96 is the Histidine box-1 element; the sequence is HDCGH. The short motif at 128–132 is the Histidine box-2 element; sequence HRTHH. 2 consecutive transmembrane segments (helical) span residues 207-227 and 228-248; these read VLLIGMVGLLGFLTYQWGWMW and LLKYYAVPYLVFIVWLDLVTF. The Histidine box-3 signature appears at 294 to 298; it reads HHIFL.

Belongs to the fatty acid desaturase type 2 family. Requires Fe(2+) as cofactor.

It is found in the membrane. The enzyme catalyses a 1-[(9Z,12Z)-octadecdienoyl]-2-acyl-glycerolipid + 2 reduced [2Fe-2S]-[ferredoxin] + O2 + 2 H(+) = a 1-[(9Z,12Z,15Z)-octadectrienoyl]-2-acyl-glycerolipid + 2 oxidized [2Fe-2S]-[ferredoxin] + 2 H2O. It carries out the reaction a 1-[(6Z,9Z,12Z)-octadectrienoyl]-2-acyl-glycerolipid + 2 reduced [2Fe-2S]-[ferredoxin] + O2 + 2 H(+) = a 1-[(6Z,9Z,12Z,15Z)-octadectetraenoyl]-2-acyl-glycerolipid + 2 oxidized [2Fe-2S]-[ferredoxin] + 2 H2O. Its pathway is lipid metabolism; polyunsaturated fatty acid biosynthesis. Desaturase involved in fatty acid biosynthesis. Introduces a double bond at carbon 15 of linoleoyl and gamma-linolenoyl groups attached to the sn-1 position of the glycerol moiety of membrane glycerolipids. The protein is sn-1 acyl-lipid omega-3 desaturase (ferredoxin) of Nostoc sp. (strain 36).